The primary structure comprises 568 residues: Potassium-transporting ATPase potassium-binding subunit (568 aa).

A run of 10 helical transmembrane segments spans residues 3 to 23, 64 to 84, 133 to 153, 179 to 199, 255 to 275, 281 to 301, 375 to 395, 418 to 438, 497 to 517, and 536 to 556; these read TEILGVVAQVALMVILAYPLG, FLKALLILNAFWFVWGMVLLV, FVIMLFQFITAATGMAAMAGI, ILLPLSLIVGFILILQGTPMG, MVECWSILIIPMAMVLALGFY, LAYSIFGVMLFAFLVGVCINV, FGGVGVGWMNYYTFIIIAVFI, IATIVALLHPFVILVFTAISS, IVLILSRFLPIIGQVAIAGLL, and TFGIMTFVVIFIVAALSFFPV.

This sequence belongs to the KdpA family. The system is composed of three essential subunits: KdpA, KdpB and KdpC.

Its subcellular location is the cell inner membrane. Part of the high-affinity ATP-driven potassium transport (or Kdp) system, which catalyzes the hydrolysis of ATP coupled with the electrogenic transport of potassium into the cytoplasm. This subunit binds the periplasmic potassium ions and delivers the ions to the membrane domain of KdpB through an intramembrane tunnel. This Bacteroides thetaiotaomicron (strain ATCC 29148 / DSM 2079 / JCM 5827 / CCUG 10774 / NCTC 10582 / VPI-5482 / E50) protein is Potassium-transporting ATPase potassium-binding subunit.